A 373-amino-acid polypeptide reads, in one-letter code: Bifunctional enzyme IspD/IspF (373 aa).

Residues 1-213 form a 2-C-methyl-D-erythritol 4-phosphate cytidylyltransferase region; sequence MSDLTLVLLG…CLQKPSATKR (213 aa). The interval 213–373 is 2-C-methyl-D-erythritol 2,4-cyclodiphosphate synthase; sequence RIGNGLDVHA…TLHYFDWSEI (161 aa). Residues D219 and H221 each contribute to the a divalent metal cation site. Residues 219 to 221 and 245 to 246 contribute to the 4-CDP-2-C-methyl-D-erythritol 2-phosphate site; these read DVH and HS. H253 serves as a coordination point for a divalent metal cation. 4-CDP-2-C-methyl-D-erythritol 2-phosphate contacts are provided by residues 267–269, 272–276, 343–346, F350, and R353; these read DIG, FPDSD, and TTTE.

In the N-terminal section; belongs to the IspD/TarI cytidylyltransferase family. IspD subfamily. This sequence in the C-terminal section; belongs to the IspF family. A divalent metal cation serves as cofactor.

The enzyme catalyses 2-C-methyl-D-erythritol 4-phosphate + CTP + H(+) = 4-CDP-2-C-methyl-D-erythritol + diphosphate. The catalysed reaction is 4-CDP-2-C-methyl-D-erythritol 2-phosphate = 2-C-methyl-D-erythritol 2,4-cyclic diphosphate + CMP. It functions in the pathway isoprenoid biosynthesis; isopentenyl diphosphate biosynthesis via DXP pathway; isopentenyl diphosphate from 1-deoxy-D-xylulose 5-phosphate: step 2/6. It participates in isoprenoid biosynthesis; isopentenyl diphosphate biosynthesis via DXP pathway; isopentenyl diphosphate from 1-deoxy-D-xylulose 5-phosphate: step 4/6. Functionally, bifunctional enzyme that catalyzes the formation of 4-diphosphocytidyl-2-C-methyl-D-erythritol from CTP and 2-C-methyl-D-erythritol 4-phosphate (MEP) (IspD), and catalyzes the conversion of 4-diphosphocytidyl-2-C-methyl-D-erythritol 2-phosphate (CDP-ME2P) to 2-C-methyl-D-erythritol 2,4-cyclodiphosphate (ME-CPP) with a corresponding release of cytidine 5-monophosphate (CMP) (IspF). This is Bifunctional enzyme IspD/IspF from Nitratiruptor sp. (strain SB155-2).